A 68-amino-acid polypeptide reads, in one-letter code: SERF-like protein YDL085C-A (68 aa).

Composition is skewed to basic and acidic residues over residues 1-43 and 50-68; these read MARG…EILR and DARR…KTRR. The segment at 1–68 is disordered; sequence MARGNQRDLA…EKLKAEKTRR (68 aa). Ser-37 carries the phosphoserine modification.

The protein belongs to the SERF family.

The protein localises to the cytoplasm. It localises to the nucleus. The protein is SERF-like protein YDL085C-A of Saccharomyces cerevisiae (strain ATCC 204508 / S288c) (Baker's yeast).